A 451-amino-acid chain; its full sequence is Interferon regulatory factor 4 (451 aa).

The segment at residues asparagine 21 to proline 129 is a DNA-binding region (IRF tryptophan pentad repeat). Phosphoserine; by ROCK2 is present on residues serine 447 and serine 448.

This sequence belongs to the IRF family. In terms of assembly, interacts with the BATF-JUNB heterodimer. Interacts with BATF (via bZIP domain); the interaction is direct. Interacts with SPIB. Interacts with DEF6. Directly interacts with NLRP3 in the nucleus of Th2 cells; this interaction enhances IRF4 ability to bind to the IL4 promoter and is required for optimal IRF4-dependent IL4 transcription. Interacts with SPI1. In terms of processing, phosphorylation by ROCK2 regulates IL-17 and IL-21 production. In terms of tissue distribution, lymphoid cells.

It localises to the nucleus. The protein localises to the cytoplasm. Transcriptional activator. Binds to the interferon-stimulated response element (ISRE) of the MHC class I promoter. Binds the immunoglobulin lambda light chain enhancer, together with PU.1. Probably plays a role in ISRE-targeted signal transduction mechanisms specific to lymphoid cells. Involved in CD8(+) dendritic cell differentiation by forming a complex with the BATF-JUNB heterodimer in immune cells, leading to recognition of AICE sequence (5'-TGAnTCA/GAAA-3'), an immune-specific regulatory element, followed by cooperative binding of BATF and IRF4 and activation of genes. This Homo sapiens (Human) protein is Interferon regulatory factor 4.